The chain runs to 1095 residues: MSVNIPSNSVPSGASRFQVHVINEGHGSGAAMSDSTDPPHYEETSFGDEAQNRLKISFRPGNQECYENFLQTGETAKTDTTFHAYDSHTNTYYLQTFGHNTMDAVPKIEYYRNTGSVSGPKVNRPSLQEIHEQLAKNVAVAPGSADRVANGDGMPGDEQAENKEEDVTGVVKFGWVKGVLVRCMLNIWGVMLFIRLSWIVGEAGIGLGVIIIGLSVVVTTLTGISMSAICTNGVVRGGGAYYLISRSLGPEFGGSIGLIFRFANAVRVAMYVVGFAETVVDLLKESDSMMVDPTNDIRIIGSITVVILLGISVAGMEWEAKAQVILLVILLIGIANFFIGTVIPSNNEKKSRGFFNYQASIFAENFGPSFTEGEGFFSVFAIFFPAATGILAGANISGDLEDPQDAIPRGTMLAIFITTVAYIGVAICVRACVVRDATGSMNDTVVSGMNCNGSAACGLGYDFSRCQHEPCQYGLMNNFQVMSMVSGFGPLITAGIFSATLSSALASLVSAPKVFQALCKDNIFKGLQFFAKGYGKNNEPLRGYFLTFVIAMAFILIAELNVIAPIISNFFLASYALINFSCFHASYAKSPGWRPAYGIYNMWVSLFGAILCCAVMFVINWWAAVITYVIELFLYIYVTYKKPDVNWGSSTQALSYVSALDNALELTTVEDHVKNFRPQCIVLTGGPMTRPALLDITHAFTKNSGLCICCEVFVGPRKLCVKEMNSGMAKKQAWLMKNKIKAFYAAVAADCFRDGVRSLLQASGLGRMKPNTLVIGYKKNWRKAPLSELENYVGIIHDAFDFEIGVVIVRISQGFDISPVLQVQDELEKLEQERLALEAAIKDNDCEEGKGGIRGLFKKAGKLNITKPAPKKDSNISTIQSMHVGEFNQKLVEASAQFKKKQGKGTIDVWWLFDDGGLTLLIPYILTLRKKWKDCKLRIYVGGKINRIEEEKISMASLLSKFRIKFADIHIIGDINIKPNKESWKVFEEMIEPYRLHESHKDLTTAEKLKRESPWKITDAELEAVKEKSYRQVRLNELLQEHSRAANLIVLSLPVARKGSISDLLYMAWLEILTKNLPPVLLVRGNHKNVLTFYS.

The Cytoplasmic portion of the chain corresponds to 1 to 173 (MSVNIPSNSV…EEDVTGVVKF (173 aa)). The RFXV motif signature appears at 16-19 (RFQV). A disordered region spans residues 26–45 (HGSGAAMSDSTDPPHYEETS). Phosphoserine is present on residues serine 57 and serine 87. Phosphothreonine occurs at positions 91, 96, 101, and 114. At serine 116 the chain carries Phosphoserine. Residue serine 126 is modified to Phosphoserine; by AMPK. Serine 144 carries the phosphoserine modification. A helical transmembrane segment spans residues 174 to 194 (GWVKGVLVRCMLNIWGVMLFI). Over 195-197 (RLS) the chain is Extracellular. A helical transmembrane segment spans residues 198–218 (WIVGEAGIGLGVIIIGLSVVV). Residues 219–255 (TTLTGISMSAICTNGVVRGGGAYYLISRSLGPEFGGS) are Cytoplasmic-facing. Residues 256–276 (IGLIFRFANAVRVAMYVVGFA) traverse the membrane as a helical segment. Residues 277-298 (ETVVDLLKESDSMMVDPTNDIR) are Extracellular-facing. Residues 299 to 319 (IIGSITVVILLGISVAGMEWE) traverse the membrane as a helical segment. The Cytoplasmic portion of the chain corresponds to 320-323 (AKAQ). The helical transmembrane segment at 324-344 (VILLVILLIGIANFFIGTVIP) threads the bilayer. Residues 345-375 (SNNEKKSRGFFNYQASIFAENFGPSFTEGEG) are Extracellular-facing. Residues 376–396 (FFSVFAIFFPAATGILAGANI) traverse the membrane as a helical segment. The Cytoplasmic portion of the chain corresponds to 397–413 (SGDLEDPQDAIPRGTML). The helical transmembrane segment at 414 to 434 (AIFITTVAYIGVAICVRACVV) threads the bilayer. Topologically, residues 435–546 (RDATGSMNDT…NNEPLRGYFL (112 aa)) are extracellular. N-linked (GlcNAc...) asparagine glycosylation is found at asparagine 442 and asparagine 452. The next 2 helical transmembrane spans lie at 547–567 (TFVI…APII) and 568–588 (SNFF…ASYA). At 589–605 (KSPGWRPAYGIYNMWVS) the chain is on the extracellular side. Residues 606–626 (LFGAILCCAVMFVINWWAAVI) form a helical membrane-spanning segment. Residues 627-1095 (TYVIELFLYI…NHKNVLTFYS (469 aa)) are Cytoplasmic-facing.

This sequence belongs to the SLC12A transporter family. As to quaternary structure, when phosphorylated, interacts with PPP3CB. Post-translationally, phosphorylated at Ser-87, Thr-96 and Thr-101 by OXSR1/OSR1 and STK39/SPAK downstream of WNK kinases (WNK1, WNK2, WNK3 or WNK4), promoting its activity. In terms of tissue distribution, expressed predominantly in kidney (at protein level).

Its subcellular location is the apical cell membrane. The enzyme catalyses K(+)(out) + 2 chloride(out) + Na(+)(out) = K(+)(in) + 2 chloride(in) + Na(+)(in). With respect to regulation, activated following phosphorylation by OXSR1/OSR1 and STK39/SPAK downstream of WNK kinases (WNK1, WNK2, WNK3 or WNK4). Renal sodium, potassium and chloride ion cotransporter that mediates the transepithelial NaCl reabsorption in the thick ascending limb and plays an essential role in the urinary concentration and volume regulation. Electrically silent transporter system. The polypeptide is Solute carrier family 12 member 1 (Slc12a1) (Rattus norvegicus (Rat)).